A 166-amino-acid polypeptide reads, in one-letter code: Lithostathine-1-beta (166 aa).

Positions 1–22 (MAQTNSFFMLISSLMFLSLSQG) are cleaved as a signal peptide. The O-linked (GalNAc...) threonine glycan is linked to threonine 27. The 131-residue stretch at 34–164 (ISCPEGTNAY…EKKFSFVCKF (131 aa)) folds into the C-type lectin domain. Intrachain disulfides connect cysteine 36-cysteine 47, cysteine 64-cysteine 162, and cysteine 137-cysteine 154.

Post-translationally, all O-linked glycans consist of Gal-GlcNAc-Gal-GalNAc tetrasaccharide core and get elongated (microheterogeneity).

It localises to the secreted. Functionally, might act as an inhibitor of spontaneous calcium carbonate precipitation. May be associated with neuronal sprouting in brain, and with brain and pancreas regeneration. This is Lithostathine-1-beta (REG1B) from Homo sapiens (Human).